Reading from the N-terminus, the 467-residue chain is ATP-dependent protease ATPase subunit HslU (467 aa).

ATP-binding positions include Val-22 and 64-69 (GVGKTE). The tract at residues 149–192 (QTNNPLESLFGGAIPNFGQNNEDEEEPPTEEIKTKRSEIKRQLE) is disordered. Residues 178–192 (EEIKTKRSEIKRQLE) show a composition bias toward basic and acidic residues. ATP is bound by residues Asp-280, Glu-345, and Arg-417.

The protein belongs to the ClpX chaperone family. HslU subfamily. As to quaternary structure, a double ring-shaped homohexamer of HslV is capped on each side by a ring-shaped HslU homohexamer. The assembly of the HslU/HslV complex is dependent on binding of ATP.

Its subcellular location is the cytoplasm. In terms of biological role, ATPase subunit of a proteasome-like degradation complex; this subunit has chaperone activity. The binding of ATP and its subsequent hydrolysis by HslU are essential for unfolding of protein substrates subsequently hydrolyzed by HslV. HslU recognizes the N-terminal part of its protein substrates and unfolds these before they are guided to HslV for hydrolysis. This Staphylococcus aureus (strain MRSA252) protein is ATP-dependent protease ATPase subunit HslU.